A 165-amino-acid polypeptide reads, in one-letter code: Phosphopantetheine adenylyltransferase (165 aa).

Ser-10 is a binding site for substrate. ATP contacts are provided by residues 10 to 11 and His-18; that span reads SF. 3 residues coordinate substrate: Lys-42, Thr-79, and Arg-93. ATP contacts are provided by residues 94 to 96, Glu-104, and 129 to 135; these read GLR and VRPITAT.

The protein belongs to the bacterial CoaD family. Homohexamer. Requires Mg(2+) as cofactor.

The protein localises to the cytoplasm. It catalyses the reaction (R)-4'-phosphopantetheine + ATP + H(+) = 3'-dephospho-CoA + diphosphate. It functions in the pathway cofactor biosynthesis; coenzyme A biosynthesis; CoA from (R)-pantothenate: step 4/5. In terms of biological role, reversibly transfers an adenylyl group from ATP to 4'-phosphopantetheine, yielding dephospho-CoA (dPCoA) and pyrophosphate. This is Phosphopantetheine adenylyltransferase from Rhodopseudomonas palustris (strain HaA2).